The following is a 161-amino-acid chain: Nucleotide-binding protein Veis_3464 (161 aa).

It belongs to the YajQ family.

In terms of biological role, nucleotide-binding protein. This is Nucleotide-binding protein Veis_3464 from Verminephrobacter eiseniae (strain EF01-2).